Reading from the N-terminus, the 165-residue chain is Putative protein FAM86C2P (165 aa).

This sequence belongs to the class I-like SAM-binding methyltransferase superfamily. EEF2KMT family.

This is Putative protein FAM86C2P (FAM86C2P) from Homo sapiens (Human).